The primary structure comprises 259 residues: Truncated Ankyrin repeat protein OPG003 (259 aa).

It belongs to the orthopoxvirus OPG003 family.

The sequence is that of Truncated Ankyrin repeat protein OPG003 (OPG003) from Vaccinia virus (strain Copenhagen) (VACV).